Here is a 234-residue protein sequence, read N- to C-terminus: Sugar fermentation stimulation protein homolog (234 aa).

Belongs to the SfsA family.

The protein is Sugar fermentation stimulation protein homolog of Shewanella baltica (strain OS155 / ATCC BAA-1091).